Here is a 278-residue protein sequence, read N- to C-terminus: Release factor glutamine methyltransferase (278 aa).

Residues 117 to 121, Asp140, and Asn184 contribute to the S-adenosyl-L-methionine site; that span reads GTGSG. 184–187 is a binding site for substrate; sequence NPPY.

This sequence belongs to the protein N5-glutamine methyltransferase family. PrmC subfamily.

It catalyses the reaction L-glutaminyl-[peptide chain release factor] + S-adenosyl-L-methionine = N(5)-methyl-L-glutaminyl-[peptide chain release factor] + S-adenosyl-L-homocysteine + H(+). Its function is as follows. Methylates the class 1 translation termination release factors RF1/PrfA and RF2/PrfB on the glutamine residue of the universally conserved GGQ motif. The sequence is that of Release factor glutamine methyltransferase from Bacteroides thetaiotaomicron (strain ATCC 29148 / DSM 2079 / JCM 5827 / CCUG 10774 / NCTC 10582 / VPI-5482 / E50).